The primary structure comprises 315 residues: N-acetyl-gamma-glutamyl-phosphate reductase (315 aa).

The active site involves Cys-117.

The protein belongs to the NAGSA dehydrogenase family. Type 2 subfamily.

The protein localises to the cytoplasm. It carries out the reaction N-acetyl-L-glutamate 5-semialdehyde + phosphate + NADP(+) = N-acetyl-L-glutamyl 5-phosphate + NADPH + H(+). It functions in the pathway amino-acid biosynthesis; L-arginine biosynthesis; N(2)-acetyl-L-ornithine from L-glutamate: step 3/4. Catalyzes the NADPH-dependent reduction of N-acetyl-5-glutamyl phosphate to yield N-acetyl-L-glutamate 5-semialdehyde. The polypeptide is N-acetyl-gamma-glutamyl-phosphate reductase (Burkholderia ambifaria (strain ATCC BAA-244 / DSM 16087 / CCUG 44356 / LMG 19182 / AMMD) (Burkholderia cepacia (strain AMMD))).